Here is a 276-residue protein sequence, read N- to C-terminus: Putative pyruvate, phosphate dikinase regulatory protein 1 (276 aa).

157–164 serves as a coordination point for ADP; sequence GVSRTSKT.

Belongs to the pyruvate, phosphate/water dikinase regulatory protein family. PDRP subfamily.

It catalyses the reaction N(tele)-phospho-L-histidyl/L-threonyl-[pyruvate, phosphate dikinase] + ADP = N(tele)-phospho-L-histidyl/O-phospho-L-threonyl-[pyruvate, phosphate dikinase] + AMP + H(+). The catalysed reaction is N(tele)-phospho-L-histidyl/O-phospho-L-threonyl-[pyruvate, phosphate dikinase] + phosphate + H(+) = N(tele)-phospho-L-histidyl/L-threonyl-[pyruvate, phosphate dikinase] + diphosphate. In terms of biological role, bifunctional serine/threonine kinase and phosphorylase involved in the regulation of the pyruvate, phosphate dikinase (PPDK) by catalyzing its phosphorylation/dephosphorylation. This chain is Putative pyruvate, phosphate dikinase regulatory protein 1, found in Staphylococcus haemolyticus (strain JCSC1435).